The primary structure comprises 500 residues: L-arabinose isomerase (500 aa).

Residues Glu-306, Glu-333, His-350, and His-450 each coordinate Mn(2+).

It belongs to the arabinose isomerase family. As to quaternary structure, homohexamer. The cofactor is Mn(2+).

The catalysed reaction is beta-L-arabinopyranose = L-ribulose. It functions in the pathway carbohydrate degradation; L-arabinose degradation via L-ribulose; D-xylulose 5-phosphate from L-arabinose (bacterial route): step 1/3. Functionally, catalyzes the conversion of L-arabinose to L-ribulose. The polypeptide is L-arabinose isomerase (Yersinia pseudotuberculosis serotype O:3 (strain YPIII)).